Consider the following 407-residue polypeptide: Phosphopentomutase (407 aa).

Residues Asp10, Asp306, His311, Asp347, His348, and His359 each contribute to the Mn(2+) site.

Belongs to the phosphopentomutase family. Requires Mn(2+) as cofactor.

It localises to the cytoplasm. The catalysed reaction is 2-deoxy-alpha-D-ribose 1-phosphate = 2-deoxy-D-ribose 5-phosphate. It carries out the reaction alpha-D-ribose 1-phosphate = D-ribose 5-phosphate. It functions in the pathway carbohydrate degradation; 2-deoxy-D-ribose 1-phosphate degradation; D-glyceraldehyde 3-phosphate and acetaldehyde from 2-deoxy-alpha-D-ribose 1-phosphate: step 1/2. Isomerase that catalyzes the conversion of deoxy-ribose 1-phosphate (dRib-1-P) and ribose 1-phosphate (Rib-1-P) to deoxy-ribose 5-phosphate (dRib-5-P) and ribose 5-phosphate (Rib-5-P), respectively. The protein is Phosphopentomutase of Buchnera aphidicola subsp. Acyrthosiphon pisum (strain APS) (Acyrthosiphon pisum symbiotic bacterium).